Here is a 522-residue protein sequence, read N- to C-terminus: Serine/threonine-protein kinase BSK1-2 (522 aa).

The disordered stretch occupies residues 1–54 (MGCCGSSLRVGSHAPEKPPRRARPPPPPPQPHHPRRPSFTLNAHQAAASSSAAS). G2 carries the N-myristoyl glycine lipid modification. Residues 79 to 338 (ANIVSESGEK…KLVSILQPLQ (260 aa)) form the Protein kinase domain. Residues 85–93 (SGEKAPNLV) and K111 each bind ATP. Residue D205 is the Proton acceptor of the active site.

Belongs to the protein kinase superfamily. Ser/Thr protein kinase family.

The protein resides in the cell membrane. It carries out the reaction L-seryl-[protein] + ATP = O-phospho-L-seryl-[protein] + ADP + H(+). It catalyses the reaction L-threonyl-[protein] + ATP = O-phospho-L-threonyl-[protein] + ADP + H(+). Probable serine/threonine kinase that functions as a positive regulator of plant immunity. May be involved in the regulation of pattern-triggered immunity (PTI). Does not seem to be involved in responses to brassinosteroid (BR) signaling. This Oryza sativa subsp. japonica (Rice) protein is Serine/threonine-protein kinase BSK1-2.